We begin with the raw amino-acid sequence, 334 residues long: Geminin coiled-coil domain-containing protein 1 (334 aa).

The stretch at Ser-82–Leu-119 forms a coiled coil. The segment at Phe-143–Lys-167 is disordered.

It belongs to the GEMC1 family. In terms of processing, highly phosphorylated by CDK2; stimulates initiation of DNA replication.

Its subcellular location is the nucleus. In terms of biological role, regulator of DNA replication. Promotes initiation of chromosomal DNA replication by mediating TOPBP1- and CDK2-dependent recruitment of CDC45L onto replication origins. This Homo sapiens (Human) protein is Geminin coiled-coil domain-containing protein 1 (GMNC).